Reading from the N-terminus, the 341-residue chain is Ribosomal RNA small subunit methyltransferase C (341 aa).

Belongs to the methyltransferase superfamily. RsmC family. As to quaternary structure, monomer.

Its subcellular location is the cytoplasm. The enzyme catalyses guanosine(1207) in 16S rRNA + S-adenosyl-L-methionine = N(2)-methylguanosine(1207) in 16S rRNA + S-adenosyl-L-homocysteine + H(+). Its function is as follows. Specifically methylates the guanine in position 1207 of 16S rRNA in the 30S particle. The protein is Ribosomal RNA small subunit methyltransferase C of Vibrio parahaemolyticus serotype O3:K6 (strain RIMD 2210633).